The following is a 599-amino-acid chain: Elongation factor 4 (599 aa).

A tr-type G domain is found at lysine 2–glutamate 184. GTP-binding positions include aspartate 14–threonine 19 and asparagine 131–aspartate 134.

Belongs to the TRAFAC class translation factor GTPase superfamily. Classic translation factor GTPase family. LepA subfamily.

The protein localises to the cell inner membrane. The enzyme catalyses GTP + H2O = GDP + phosphate + H(+). Functionally, required for accurate and efficient protein synthesis under certain stress conditions. May act as a fidelity factor of the translation reaction, by catalyzing a one-codon backward translocation of tRNAs on improperly translocated ribosomes. Back-translocation proceeds from a post-translocation (POST) complex to a pre-translocation (PRE) complex, thus giving elongation factor G a second chance to translocate the tRNAs correctly. Binds to ribosomes in a GTP-dependent manner. This Shigella dysenteriae serotype 1 (strain Sd197) protein is Elongation factor 4.